Reading from the N-terminus, the 268-residue chain is Glycine/sarcosine N-methyltransferase (268 aa).

S-adenosyl-L-methionine-binding positions include Tyr-26, Trp-34, Arg-43, Ala-67, Asp-88, 114 to 115 (DW), and Leu-132. Positions 134, 167, and 206 each coordinate substrate.

This sequence belongs to the class I-like SAM-binding methyltransferase superfamily. Glycine N-methyltransferase family. Monomer.

It catalyses the reaction glycine + 2 S-adenosyl-L-methionine = N,N-dimethylglycine + 2 S-adenosyl-L-homocysteine + 2 H(+). It carries out the reaction glycine + S-adenosyl-L-methionine = sarcosine + S-adenosyl-L-homocysteine + H(+). The catalysed reaction is sarcosine + S-adenosyl-L-methionine = N,N-dimethylglycine + S-adenosyl-L-homocysteine + H(+). It functions in the pathway amine and polyamine biosynthesis; betaine biosynthesis via glycine pathway; betaine from glycine: step 1/3. The protein operates within amine and polyamine biosynthesis; betaine biosynthesis via glycine pathway; betaine from glycine: step 2/3. Its activity is regulated as follows. p-chloromercuribenzoic acid inhibits more than 95% of the GSMT activities on glycine and sarcosine, and S-adenosylhomocysteine (AdoHcy) inhibits completely GSMT activities. In terms of biological role, catalyzes the methylation of glycine and sarcosine to sarcosine and dimethylglycine, respectively, with S-adenosylmethionine (AdoMet) acting as the methyl donor. It has strict specificity for glycine and sarcosine as the methyl group acceptors. This Halorhodospira halochloris (Ectothiorhodospira halochloris) protein is Glycine/sarcosine N-methyltransferase.